The primary structure comprises 554 residues: Terpene synthase 17 (554 aa).

Asp-306, Asp-310, and Glu-458 together coordinate Mg(2+). The short motif at Asp-306–Asp-310 is the DDXXD motif element.

Belongs to the terpene synthase family. Tpsa subfamily. Mg(2+) is required as a cofactor. The cofactor is Mn(2+). Mostly expressed in stem and trichomes, to a lower extent in leaves, flowers and roots and, at low levels, in fruits.

The enzyme catalyses (2Z,6Z)-farnesyl diphosphate = beta-bisabolene + diphosphate. The catalysed reaction is (2E,6E)-farnesyl diphosphate = (+)-valencene + diphosphate. It catalyses the reaction (2E,6E)-farnesyl diphosphate = (E)-beta-farnesene + diphosphate. It carries out the reaction (2E,6E)-farnesyl diphosphate = gamma-gurjunene + diphosphate. The enzyme catalyses (2Z,6Z)-farnesyl diphosphate = (E)-gamma-bisabolene + diphosphate. The catalysed reaction is (2E)-geranyl diphosphate = limonene + diphosphate. It catalyses the reaction (2E)-geranyl diphosphate = beta-myrcene + diphosphate. It carries out the reaction (2E)-geranyl diphosphate = (E)-beta-ocimene + diphosphate. The enzyme catalyses (2E)-geranyl diphosphate = terpinolene + diphosphate. The catalysed reaction is (2E)-geranyl diphosphate = gamma-terpinene + diphosphate. It catalyses the reaction (2Z,6Z)-farnesyl diphosphate = (Z)-gamma-bisabolene + diphosphate. It carries out the reaction (2E,6E)-farnesyl diphosphate = (1S,5S,6R)-alpha-bergamotene + diphosphate. The enzyme catalyses (2Z,6Z)-farnesyl diphosphate = (1S,5S,6S)-alpha-bergamotene + diphosphate. Its pathway is secondary metabolite biosynthesis; terpenoid biosynthesis. Functionally, sesquiterpene synthase involved in the biosynthesis of volatile compounds. Mediates the conversion of (2E,6E)-farnesyl diphosphate (FPP) into gamma-gurjunene, (E)-beta-farnesene and (+)-valencene, and of (2Z,6Z)-farnesyl diphosphate ((ZZ)-FPP) into (E)-alpha-bergamotene and (Z)-gamma-bisabolene as well as beta-bisabolene, (Z)-alpha-bergamotene and (E)-gamma-bisabolene to a lower extent. Can act with a low efficiency as a monoterpene synthase with geranyl diphosphate (GPP) as substrate, thus producing beta-myrcene, (E)-beta-ocimene, limonene, terpinolene, gamma-terpinene and (Z)-beta-ocimene. The chain is Terpene synthase 17 from Solanum lycopersicum (Tomato).